Reading from the N-terminus, the 646-residue chain is Translation initiation factor IF-2 (646 aa).

Positions 146 to 315 constitute a tr-type G domain; the sequence is PRPPVVTVMG…LLVAEMEELR (170 aa). The tract at residues 155-162 is G1; it reads GHVDHGKT. 155 to 162 serves as a coordination point for GTP; sequence GHVDHGKT. Positions 180-184 are G2; it reads GITQH. The tract at residues 201 to 204 is G3; it reads DTPG. GTP-binding positions include 201–205 and 255–258; these read DTPGH and NKID. Positions 255–258 are G4; it reads NKID. Positions 291–293 are G5; the sequence is SAK.

Belongs to the TRAFAC class translation factor GTPase superfamily. Classic translation factor GTPase family. IF-2 subfamily.

Its subcellular location is the cytoplasm. In terms of biological role, one of the essential components for the initiation of protein synthesis. Protects formylmethionyl-tRNA from spontaneous hydrolysis and promotes its binding to the 30S ribosomal subunits. Also involved in the hydrolysis of GTP during the formation of the 70S ribosomal complex. The protein is Translation initiation factor IF-2 of Clostridioides difficile (strain 630) (Peptoclostridium difficile).